Consider the following 505-residue polypeptide: Phosphoethanolamine N-methyltransferase (505 aa).

S-adenosyl-L-homocysteine-binding residues include Gly76, Arg81, Asp97, Asp122, Val123, and Asn141. The phosphocholine site is built by Ser174, Ser179, Gly180, Arg184, and Tyr191. Residues 260–261 and Tyr269 each bind N-methylethanolamine phosphate; that span reads QY. Tyr269 serves as a coordination point for phosphocholine. Residues Val278, Ser279, Gly305, Asp327, Asp353, Cys354, and Arg370 each coordinate S-adenosyl-L-homocysteine. Phosphocholine-binding residues include Tyr401, Tyr415, Arg419, Tyr421, and Lys487. Residues Tyr401, Tyr415, 419–421, and Lys487 contribute to the N-methylethanolamine phosphate site; that span reads RGY.

Belongs to the class I-like SAM-binding methyltransferase superfamily. PEAMT family.

It carries out the reaction phosphoethanolamine + S-adenosyl-L-methionine = N-methylethanolamine phosphate + S-adenosyl-L-homocysteine + H(+). The enzyme catalyses N-methylethanolamine phosphate + S-adenosyl-L-methionine = N,N-dimethylethanolamine phosphate + S-adenosyl-L-homocysteine + H(+). The catalysed reaction is N,N-dimethylethanolamine phosphate + S-adenosyl-L-methionine = phosphocholine + S-adenosyl-L-homocysteine + H(+). Its pathway is phospholipid metabolism; phosphatidylcholine biosynthesis; phosphocholine from phosphoethanolamine: step 1/1. Inhibited by phosphatidic acid. Involved in phosphocholine biosynthesis. Catalyzes the N-methylation of phosphoethanolamine, phosphomonomethylethanolamine and phosphodimethylethanolamine, the three methylation steps required to convert phosphoethanolamine to phosphocholine (PC). In Triticum aestivum (Wheat), this protein is Phosphoethanolamine N-methyltransferase.